A 78-amino-acid polypeptide reads, in one-letter code: Acyl carrier protein (78 aa).

A Carrier domain is found at 1–76; the sequence is MSLEERVKEI…DVINYLKEKV (76 aa). Residue Ser36 is modified to O-(pantetheine 4'-phosphoryl)serine.

The protein belongs to the acyl carrier protein (ACP) family. 4'-phosphopantetheine is transferred from CoA to a specific serine of apo-ACP by AcpS. This modification is essential for activity because fatty acids are bound in thioester linkage to the sulfhydryl of the prosthetic group.

It is found in the cytoplasm. It functions in the pathway lipid metabolism; fatty acid biosynthesis. Functionally, carrier of the growing fatty acid chain in fatty acid biosynthesis. The sequence is that of Acyl carrier protein from Aquifex aeolicus (strain VF5).